Reading from the N-terminus, the 301-residue chain is Cell division control protein 2 homolog 1 (301 aa).

The Protein kinase domain maps to 5–297; that stretch reads YERLQKIGEG…AAQALEHPYF (293 aa). Residues 11 to 19 and Lys-34 contribute to the ATP site; that span reads IGEGSYGVV. Ser-15 is subject to Phosphoserine. Tyr-16 bears the Phosphotyrosine mark. The Proton acceptor role is filled by Asp-127. Thr-160 carries the post-translational modification Phosphothreonine; by CAK.

It belongs to the protein kinase superfamily. CMGC Ser/Thr protein kinase family. CDC2/CDKX subfamily. Forms a stable but non-covalent complex with a regulatory subunit and with a cyclin.

It catalyses the reaction L-seryl-[protein] + ATP = O-phospho-L-seryl-[protein] + ADP + H(+). The enzyme catalyses L-threonyl-[protein] + ATP = O-phospho-L-threonyl-[protein] + ADP + H(+). Its activity is regulated as follows. Phosphorylation at Ser-15 or Tyr-16 inactivates the enzyme, while phosphorylation at Thr-160 activates it. Probably involved in the control of the cell cycle. This is Cell division control protein 2 homolog 1 (CRK1) from Trypanosoma brucei brucei.